The sequence spans 510 residues: Lysine--tRNA ligase (510 aa).

Positions 420 and 427 each coordinate Mg(2+).

This sequence belongs to the class-II aminoacyl-tRNA synthetase family. Homodimer. Mg(2+) serves as cofactor.

The protein resides in the cytoplasm. The enzyme catalyses tRNA(Lys) + L-lysine + ATP = L-lysyl-tRNA(Lys) + AMP + diphosphate. The polypeptide is Lysine--tRNA ligase (Vibrio campbellii (strain ATCC BAA-1116)).